The sequence spans 228 residues: Cytochrome c oxidase subunit 2 (228 aa).

Residues 1-26 (MPNWGQVMFQDAASSVMLQLVSFHDH) lie on the Mitochondrial intermembrane side of the membrane. Residues 27-47 (ALLVLTLVLTVVGYALLALML) form a helical membrane-spanning segment. At 48–60 (NKQVNRYIMEAQT) the chain is on the mitochondrial matrix side. A helical membrane pass occupies residues 61–81 (VETIWTILPALILLVLALPSL). Residues 82 to 228 (RILYITDEVS…FMSWVSNFKP (147 aa)) lie on the Mitochondrial intermembrane side of the membrane. Residues His161, Cys196, Glu198, Cys200, His204, and Met207 each contribute to the Cu cation site. Residue Glu198 coordinates Mg(2+).

The protein belongs to the cytochrome c oxidase subunit 2 family. Component of the cytochrome c oxidase (complex IV, CIV), a multisubunit enzyme composed of a catalytic core of 3 subunits and several supernumerary subunits. The complex exists as a monomer or a dimer and forms supercomplexes (SCs) in the inner mitochondrial membrane with ubiquinol-cytochrome c oxidoreductase (cytochrome b-c1 complex, complex III, CIII). Cu cation is required as a cofactor.

It is found in the mitochondrion inner membrane. It catalyses the reaction 4 Fe(II)-[cytochrome c] + O2 + 8 H(+)(in) = 4 Fe(III)-[cytochrome c] + 2 H2O + 4 H(+)(out). In terms of biological role, component of the cytochrome c oxidase, the last enzyme in the mitochondrial electron transport chain which drives oxidative phosphorylation. The respiratory chain contains 3 multisubunit complexes succinate dehydrogenase (complex II, CII), ubiquinol-cytochrome c oxidoreductase (cytochrome b-c1 complex, complex III, CIII) and cytochrome c oxidase (complex IV, CIV), that cooperate to transfer electrons derived from NADH and succinate to molecular oxygen, creating an electrochemical gradient over the inner membrane that drives transmembrane transport and the ATP synthase. Cytochrome c oxidase is the component of the respiratory chain that catalyzes the reduction of oxygen to water. Electrons originating from reduced cytochrome c in the intermembrane space (IMS) are transferred via the dinuclear copper A center (CU(A)) of subunit 2 and heme A of subunit 1 to the active site in subunit 1, a binuclear center (BNC) formed by heme A3 and copper B (CU(B)). The BNC reduces molecular oxygen to 2 water molecules using 4 electrons from cytochrome c in the IMS and 4 protons from the mitochondrial matrix. This chain is Cytochrome c oxidase subunit 2 (COII), found in Lumbricus terrestris (Common earthworm).